The sequence spans 254 residues: 3-deoxy-manno-octulosonate cytidylyltransferase (254 aa).

Belongs to the KdsB family.

It is found in the cytoplasm. It catalyses the reaction 3-deoxy-alpha-D-manno-oct-2-ulosonate + CTP = CMP-3-deoxy-beta-D-manno-octulosonate + diphosphate. The protein operates within nucleotide-sugar biosynthesis; CMP-3-deoxy-D-manno-octulosonate biosynthesis; CMP-3-deoxy-D-manno-octulosonate from 3-deoxy-D-manno-octulosonate and CTP: step 1/1. Its pathway is bacterial outer membrane biogenesis; lipopolysaccharide biosynthesis. Activates KDO (a required 8-carbon sugar) for incorporation into bacterial lipopolysaccharide in Gram-negative bacteria. The chain is 3-deoxy-manno-octulosonate cytidylyltransferase from Geobacter metallireducens (strain ATCC 53774 / DSM 7210 / GS-15).